A 329-amino-acid polypeptide reads, in one-letter code: Peroxidase 51 (329 aa).

Positions 1-25 are cleaved as a signal peptide; that stretch reads MVVMNKTNLLLLILSLFLAINLSSA. Disulfide bonds link Cys36–Cys119, Cys69–Cys74, Cys125–Cys325, and Cys204–Cys236. The Proton acceptor role is filled by His67. Asp68, Val71, Gly73, Asp75, and Ser77 together coordinate Ca(2+). Pro167 serves as a coordination point for substrate. His197 contributes to the heme b binding site. Thr198 contacts Ca(2+). N-linked (GlcNAc...) asparagine glycosylation is present at Asn215. Ca(2+) is bound by residues Asp249, Thr252, and Asp257.

Belongs to the peroxidase family. Classical plant (class III) peroxidase subfamily. Requires heme b as cofactor. The cofactor is Ca(2+).

Its subcellular location is the secreted. It catalyses the reaction 2 a phenolic donor + H2O2 = 2 a phenolic radical donor + 2 H2O. Its function is as follows. Removal of H(2)O(2), oxidation of toxic reductants, biosynthesis and degradation of lignin, suberization, auxin catabolism, response to environmental stresses such as wounding, pathogen attack and oxidative stress. These functions might be dependent on each isozyme/isoform in each plant tissue. This is Peroxidase 51 (PER51) from Arabidopsis thaliana (Mouse-ear cress).